A 253-amino-acid polypeptide reads, in one-letter code: 3-deoxy-manno-octulosonate cytidylyltransferase (253 aa).

It belongs to the KdsB family.

It localises to the cytoplasm. The catalysed reaction is 3-deoxy-alpha-D-manno-oct-2-ulosonate + CTP = CMP-3-deoxy-beta-D-manno-octulosonate + diphosphate. It participates in nucleotide-sugar biosynthesis; CMP-3-deoxy-D-manno-octulosonate biosynthesis; CMP-3-deoxy-D-manno-octulosonate from 3-deoxy-D-manno-octulosonate and CTP: step 1/1. Its pathway is bacterial outer membrane biogenesis; lipopolysaccharide biosynthesis. Its function is as follows. Activates KDO (a required 8-carbon sugar) for incorporation into bacterial lipopolysaccharide in Gram-negative bacteria. The protein is 3-deoxy-manno-octulosonate cytidylyltransferase of Acidithiobacillus ferrooxidans (strain ATCC 23270 / DSM 14882 / CIP 104768 / NCIMB 8455) (Ferrobacillus ferrooxidans (strain ATCC 23270)).